The following is a 322-amino-acid chain: Probable transposase for insertion sequence element ISA1214 (322 aa).

This sequence belongs to the transposase 11 family.

Functionally, involved in the transposition of the insertion sequence ISA1214. In Archaeoglobus fulgidus (strain ATCC 49558 / DSM 4304 / JCM 9628 / NBRC 100126 / VC-16), this protein is Probable transposase for insertion sequence element ISA1214.